A 196-amino-acid chain; its full sequence is MQVHNVNLTISAVRPEQYPDAKLPEVALAGRSNVGKSSLINTLINRRNYARTSSQPGKTQTLNFYNIEDLLYFVDVPGYGYAKVSQKEREKWARMIETYFSTRQELKGAISLVDARHEPSELDCQMIEFLHYYNIPVLVVGTKIDKIPKSKRNKSESQIRKKLQLTKNDRLILFSAVDKIGKDEVWNWIESITKVN.

The region spanning 22 to 195 is the EngB-type G domain; sequence KLPEVALAGR…WNWIESITKV (174 aa). Residues 30–37, 57–61, 75–78, 142–145, and 174–176 contribute to the GTP site; these read GRSNVGKS, GKTQT, DVPG, TKID, and FSA. Mg(2+) contacts are provided by Ser-37 and Thr-59.

This sequence belongs to the TRAFAC class TrmE-Era-EngA-EngB-Septin-like GTPase superfamily. EngB GTPase family. The cofactor is Mg(2+).

Necessary for normal cell division and for the maintenance of normal septation. This Ligilactobacillus salivarius (strain UCC118) (Lactobacillus salivarius) protein is Probable GTP-binding protein EngB.